Reading from the N-terminus, the 270-residue chain is tRNA pseudouridine synthase A (270 aa).

Asp-60 functions as the Nucleophile in the catalytic mechanism. The tract at residues 107–111 (FHARF) is RNA binding. Substrate is bound at residue Tyr-118. The interval 168–172 (QCQSR) is interaction with tRNA.

This sequence belongs to the tRNA pseudouridine synthase TruA family. As to quaternary structure, homodimer.

It catalyses the reaction uridine(38/39/40) in tRNA = pseudouridine(38/39/40) in tRNA. Its function is as follows. Formation of pseudouridine at positions 38, 39 and 40 in the anticodon stem and loop of transfer RNAs. The chain is tRNA pseudouridine synthase A from Escherichia coli O139:H28 (strain E24377A / ETEC).